Consider the following 557-residue polypeptide: 2-isopropylmalate synthase (557 aa).

In terms of domain architecture, Pyruvate carboxyltransferase spans 33–307; that stretch reads PIWCSSDLRD…DPQLDFSDID (275 aa). Residues aspartate 42, histidine 246, histidine 248, and asparagine 282 each coordinate Mg(2+). Residues 439–557 form a regulatory domain region; the sequence is ANAPYALVSH…SLSQQQAKAA (119 aa).

The protein belongs to the alpha-IPM synthase/homocitrate synthase family. LeuA type 2 subfamily. Homodimer. Mg(2+) is required as a cofactor.

It localises to the cytoplasm. The catalysed reaction is 3-methyl-2-oxobutanoate + acetyl-CoA + H2O = (2S)-2-isopropylmalate + CoA + H(+). The protein operates within amino-acid biosynthesis; L-leucine biosynthesis; L-leucine from 3-methyl-2-oxobutanoate: step 1/4. Catalyzes the condensation of the acetyl group of acetyl-CoA with 3-methyl-2-oxobutanoate (2-ketoisovalerate) to form 3-carboxy-3-hydroxy-4-methylpentanoate (2-isopropylmalate). This is 2-isopropylmalate synthase from Pseudomonas entomophila (strain L48).